Here is a 467-residue protein sequence, read N- to C-terminus: ATP synthase subunit beta (467 aa).

Residue glycine 153 to threonine 160 participates in ATP binding.

Belongs to the ATPase alpha/beta chains family. As to quaternary structure, F-type ATPases have 2 components, CF(1) - the catalytic core - and CF(0) - the membrane proton channel. CF(1) has five subunits: alpha(3), beta(3), gamma(1), delta(1), epsilon(1). CF(0) has three main subunits: a(1), b(2) and c(9-12). The alpha and beta chains form an alternating ring which encloses part of the gamma chain. CF(1) is attached to CF(0) by a central stalk formed by the gamma and epsilon chains, while a peripheral stalk is formed by the delta and b chains.

Its subcellular location is the cell membrane. The enzyme catalyses ATP + H2O + 4 H(+)(in) = ADP + phosphate + 5 H(+)(out). In terms of biological role, produces ATP from ADP in the presence of a proton gradient across the membrane. The catalytic sites are hosted primarily by the beta subunits. This chain is ATP synthase subunit beta, found in Lactiplantibacillus plantarum (strain ATCC BAA-793 / NCIMB 8826 / WCFS1) (Lactobacillus plantarum).